The chain runs to 187 residues: Protein SCM4 (187 aa).

3 helical membrane-spanning segments follow: residues 11–31 (IAVS…VISI), 45–65 (VLCT…GAFG), and 80–100 (LLCG…VSLF). Residues 114–134 (DLEKQKDEKLPQHHPEVKDGE) show a composition bias toward basic and acidic residues. A disordered region spans residues 114–135 (DLEKQKDEKLPQHHPEVKDGEA). A helical membrane pass occupies residues 162 to 182 (MSLHMSIVTGITIFTFGKCIL).

It belongs to the ATG33 family.

It is found in the membrane. In Saccharomyces cerevisiae (strain ATCC 204508 / S288c) (Baker's yeast), this protein is Protein SCM4 (SCM4).